Consider the following 282-residue polypeptide: uncharacterized protein (282 aa).

This is an uncharacterized protein from Mycoplasma pneumoniae (strain ATCC 29342 / M129 / Subtype 1) (Mycoplasmoides pneumoniae).